The following is a 332-amino-acid chain: L-lactate dehydrogenase A chain (332 aa).

NAD(+) is bound by residues 29-57 (GMVG…MEDK) and Arg99. Residues Arg106, Asn138, and Arg169 each coordinate substrate. Asn138 contributes to the NAD(+) binding site. The active-site Proton acceptor is His193. Residue Thr248 participates in substrate binding.

Belongs to the LDH/MDH superfamily. LDH family. Homotetramer.

The protein resides in the cytoplasm. It carries out the reaction (S)-lactate + NAD(+) = pyruvate + NADH + H(+). It participates in fermentation; pyruvate fermentation to lactate; (S)-lactate from pyruvate: step 1/1. Interconverts simultaneously and stereospecifically pyruvate and lactate with concomitant interconversion of NADH and NAD(+). This is L-lactate dehydrogenase A chain (ldha) from Gillichthys seta (Shortjaw mudsucker).